Here is a 312-residue protein sequence, read N- to C-terminus: DNA-directed RNA polymerase subunit alpha (312 aa).

An alpha N-terminal domain (alpha-NTD) region spans residues 1–226 (MIEFEKPNIT…EHFKVFMSTD (226 aa)). Positions 243-312 (NEKKLEMTIE…DLGLSLRQDD (70 aa)) are alpha C-terminal domain (alpha-CTD).

This sequence belongs to the RNA polymerase alpha chain family. In terms of assembly, homodimer. The RNAP catalytic core consists of 2 alpha, 1 beta, 1 beta' and 1 omega subunit. When a sigma factor is associated with the core the holoenzyme is formed, which can initiate transcription.

The enzyme catalyses RNA(n) + a ribonucleoside 5'-triphosphate = RNA(n+1) + diphosphate. DNA-dependent RNA polymerase catalyzes the transcription of DNA into RNA using the four ribonucleoside triphosphates as substrates. This is DNA-directed RNA polymerase subunit alpha from Lactobacillus johnsonii (strain CNCM I-12250 / La1 / NCC 533).